Here is a 224-residue protein sequence, read N- to C-terminus: Uracil-DNA glycosylase 2 (224 aa).

The active-site Proton acceptor is the Asp64.

It belongs to the uracil-DNA glycosylase (UDG) superfamily. UNG family.

It localises to the cytoplasm. It catalyses the reaction Hydrolyzes single-stranded DNA or mismatched double-stranded DNA and polynucleotides, releasing free uracil.. Excises uracil residues from the DNA which can arise as a result of misincorporation of dUMP residues by DNA polymerase or due to deamination of cytosine. This Listeria monocytogenes serovar 1/2a (strain ATCC BAA-679 / EGD-e) protein is Uracil-DNA glycosylase 2.